Reading from the N-terminus, the 629-residue chain is Methyl-accepting chemotaxis protein PctB (629 aa).

Residues 1-10 (MIKSLKFSHK) are Cytoplasmic-facing. A helical membrane pass occupies residues 11–31 (ILLAAALVVIATFSLFTLYND). Over 32 to 276 (SLQRASIRED…AYAMLTKLRT (245 aa)) the chain is Periplasmic. The region spanning 37–260 (SIREDLEDYL…LSGLDWYIGI (224 aa)) is the Cache domain. Residues Tyr109, Ser115, Tyr121, 126–128 (RPW), Glu146, and Asp173 each bind L-arginine. Residues Ser115, Tyr121, 126–128 (RPW), 144–146 (YME), and Asp173 each bind L-glutamine. The chain crosses the membrane as a helical span at residues 277–297 (SAIVAALIAVVAIVLLLGMLI). An HAMP domain is found at 298–352 (RVLMQPLTDMGRAMQDIAQGEGDLTKRLKVTSNDEFGALAISFNRFVERIHESIR). Over 298–629 (RVLMQPLTDM…LRQLVDSFKI (332 aa)) the chain is Cytoplasmic. Residues 357–593 (TARQLHDVAQ…SLNMDITEIN (237 aa)) enclose the Methyl-accepting transducer domain. Residues 405-424 (RNAADASHHASDANHQAEDG) are disordered. A compositionally biased stretch (basic and acidic residues) spans 410–424 (ASHHASDANHQAEDG).

Belongs to the methyl-accepting chemotaxis (MCP) protein family. In terms of assembly, monomer in the absence and presence of ligands.

It localises to the cell inner membrane. Its function is as follows. Chemotactic-signal transducers respond to changes in the concentration of attractants and repellents in the environment, transduce a signal from the outside to the inside of the cell, and facilitate sensory adaptation through the variation of the level of methylation. Responds to L-Arg, L-Gln, L-Ala, L-Glu, L-Lys, L-Met and L-Tyr. Also involved in repellent responses to trichloroethylene (TCE), chloroform and methylthiocyanate. The polypeptide is Methyl-accepting chemotaxis protein PctB (pctB) (Pseudomonas aeruginosa (strain ATCC 15692 / DSM 22644 / CIP 104116 / JCM 14847 / LMG 12228 / 1C / PRS 101 / PAO1)).